The sequence spans 511 residues: NAD(P)H-quinone oxidoreductase subunit 2 B, chloroplastic (511 aa).

13 helical membrane passes run 24–44 (LLLF…GLIL), 57–77 (IPWL…ALLF), 99–119 (IFQF…VEYI), 124–144 (MAIT…MFLC), 149–169 (LITI…LSGY), 183–203 (YLLM…WLYG), 227–247 (PGIS…LSPA), 295–315 (WHLL…LIAI), 323–343 (MLAY…IVGD), 354–374 (YMLF…LFGL), 395–415 (ALSL…AGFF), 418–438 (LHLF…IGLL), and 484–504 (MIVC…IIAI).

Belongs to the complex I subunit 2 family. In terms of assembly, NDH is composed of at least 16 different subunits, 5 of which are encoded in the nucleus.

It is found in the plastid. Its subcellular location is the chloroplast thylakoid membrane. It catalyses the reaction a plastoquinone + NADH + (n+1) H(+)(in) = a plastoquinol + NAD(+) + n H(+)(out). It carries out the reaction a plastoquinone + NADPH + (n+1) H(+)(in) = a plastoquinol + NADP(+) + n H(+)(out). Functionally, NDH shuttles electrons from NAD(P)H:plastoquinone, via FMN and iron-sulfur (Fe-S) centers, to quinones in the photosynthetic chain and possibly in a chloroplast respiratory chain. The immediate electron acceptor for the enzyme in this species is believed to be plastoquinone. Couples the redox reaction to proton translocation, and thus conserves the redox energy in a proton gradient. This Nandina domestica (Heavenly bamboo) protein is NAD(P)H-quinone oxidoreductase subunit 2 B, chloroplastic.